The chain runs to 460 residues: MTNYAIILAAGKGTRMTSDLPKVLHKVSGLTMLEHVFRSVKAINPEKAVTVIGHKSEMVRAVLADQSAFVHQTEQLGTGHAVMMAETQLEGLEGHTLVIAGDTPLITGESLKSLIDFHVNHKNVATILTATAPDPFGYGRIVRNKDGEVIKIVEQKDANEYEQQLKEINTGTYVFDNKRLFEALKCITTNNAQGEYYLTDVVAIFRANKEKVGAYILRDFNESLGVNDRVALATAETVMRQRITQKHMVNGVTFHNPETVYIESDVTIAPDVLIEGNVTLKGRTHIGSGTVLTNGTYIVDSEIGDNCVVTNSMIESSVLAAGVTVGPYAHLRPGTTLDREVHIGNFVEVKGSHIGEKTKAGHLTYIGNAQVGSSVNVGAGTITVNYDGQNKYETVVGDHAFIGSNSTLIAPLEIGDNALTAAGSTISKTVPADSIVIGRSRQVTKEGYAKRLAHHPSRSK.

The pyrophosphorylase stretch occupies residues 1 to 229; it reads MTNYAIILAA…FNESLGVNDR (229 aa). UDP-N-acetyl-alpha-D-glucosamine contacts are provided by residues 8-11, Lys-22, Gln-72, and 77-78; these read LAAG and GT. Asp-102 is a Mg(2+) binding site. Residues Gly-139, Glu-154, Asn-169, and Asn-227 each coordinate UDP-N-acetyl-alpha-D-glucosamine. Asn-227 serves as a coordination point for Mg(2+). Residues 230 to 250 form a linker region; it reads VALATAETVMRQRITQKHMVN. An N-acetyltransferase region spans residues 251–460; the sequence is GVTFHNPETV…RLAHHPSRSK (210 aa). Arg-332 and Lys-350 together coordinate UDP-N-acetyl-alpha-D-glucosamine. His-362 functions as the Proton acceptor in the catalytic mechanism. Tyr-365 and Asn-376 together coordinate UDP-N-acetyl-alpha-D-glucosamine. Acetyl-CoA contacts are provided by residues Ala-379, 385–386, Ser-404, Ala-422, and Arg-439; that span reads NY.

In the N-terminal section; belongs to the N-acetylglucosamine-1-phosphate uridyltransferase family. The protein in the C-terminal section; belongs to the transferase hexapeptide repeat family. As to quaternary structure, homotrimer. Requires Mg(2+) as cofactor.

The protein resides in the cytoplasm. The catalysed reaction is alpha-D-glucosamine 1-phosphate + acetyl-CoA = N-acetyl-alpha-D-glucosamine 1-phosphate + CoA + H(+). The enzyme catalyses N-acetyl-alpha-D-glucosamine 1-phosphate + UTP + H(+) = UDP-N-acetyl-alpha-D-glucosamine + diphosphate. It functions in the pathway nucleotide-sugar biosynthesis; UDP-N-acetyl-alpha-D-glucosamine biosynthesis; N-acetyl-alpha-D-glucosamine 1-phosphate from alpha-D-glucosamine 6-phosphate (route II): step 2/2. Its pathway is nucleotide-sugar biosynthesis; UDP-N-acetyl-alpha-D-glucosamine biosynthesis; UDP-N-acetyl-alpha-D-glucosamine from N-acetyl-alpha-D-glucosamine 1-phosphate: step 1/1. The protein operates within bacterial outer membrane biogenesis; LPS lipid A biosynthesis. Functionally, catalyzes the last two sequential reactions in the de novo biosynthetic pathway for UDP-N-acetylglucosamine (UDP-GlcNAc). The C-terminal domain catalyzes the transfer of acetyl group from acetyl coenzyme A to glucosamine-1-phosphate (GlcN-1-P) to produce N-acetylglucosamine-1-phosphate (GlcNAc-1-P), which is converted into UDP-GlcNAc by the transfer of uridine 5-monophosphate (from uridine 5-triphosphate), a reaction catalyzed by the N-terminal domain. This is Bifunctional protein GlmU from Streptococcus pyogenes serotype M3 (strain ATCC BAA-595 / MGAS315).